The chain runs to 634 residues: Chaperone protein HtpG (634 aa).

Positions 1–342 (MTVDTDKQTL…SADLSLNVSR (342 aa)) are a; substrate-binding. Residues 343–559 (EILQSGPVVD…QGDLGLQMRQ (217 aa)) form a b region. Positions 560–634 (LLEASGQAVP…LNKLLLELSA (75 aa)) are c.

This sequence belongs to the heat shock protein 90 family. Homodimer.

It localises to the cytoplasm. Its function is as follows. Molecular chaperone. Has ATPase activity. This Xanthomonas campestris pv. campestris (strain ATCC 33913 / DSM 3586 / NCPPB 528 / LMG 568 / P 25) protein is Chaperone protein HtpG.